The primary structure comprises 290 residues: ATP synthase gamma chain (290 aa).

This sequence belongs to the ATPase gamma chain family. As to quaternary structure, F-type ATPases have 2 components, CF(1) - the catalytic core - and CF(0) - the membrane proton channel. CF(1) has five subunits: alpha(3), beta(3), gamma(1), delta(1), epsilon(1). CF(0) has three main subunits: a, b and c.

Its subcellular location is the cell inner membrane. In terms of biological role, produces ATP from ADP in the presence of a proton gradient across the membrane. The gamma chain is believed to be important in regulating ATPase activity and the flow of protons through the CF(0) complex. This Amoebophilus asiaticus (strain 5a2) protein is ATP synthase gamma chain.